The sequence spans 428 residues: Histidine--tRNA ligase (428 aa).

This sequence belongs to the class-II aminoacyl-tRNA synthetase family. Homodimer.

Its subcellular location is the cytoplasm. It carries out the reaction tRNA(His) + L-histidine + ATP = L-histidyl-tRNA(His) + AMP + diphosphate + H(+). The sequence is that of Histidine--tRNA ligase from Bordetella pertussis (strain Tohama I / ATCC BAA-589 / NCTC 13251).